A 29-amino-acid chain; its full sequence is Cytochrome b6-f complex subunit 8 (29 aa).

The helical transmembrane segment at 3–23 (ILSLGWAALMTMFTFSLALTV) threads the bilayer.

Belongs to the PetN family. The 4 large subunits of the cytochrome b6-f complex are cytochrome b6, subunit IV (17 kDa polypeptide, PetD), cytochrome f and the Rieske protein, while the 4 small subunits are PetG, PetL, PetM and PetN. The complex functions as a dimer.

It is found in the plastid. The protein localises to the chloroplast thylakoid membrane. Component of the cytochrome b6-f complex, which mediates electron transfer between photosystem II (PSII) and photosystem I (PSI), cyclic electron flow around PSI, and state transitions. The protein is Cytochrome b6-f complex subunit 8 of Phaeodactylum tricornutum (strain CCAP 1055/1).